Reading from the N-terminus, the 333-residue chain is Phosphate acyltransferase (333 aa).

The protein belongs to the PlsX family. Homodimer. Probably interacts with PlsY.

It is found in the cytoplasm. It catalyses the reaction a fatty acyl-[ACP] + phosphate = an acyl phosphate + holo-[ACP]. It participates in lipid metabolism; phospholipid metabolism. In terms of biological role, catalyzes the reversible formation of acyl-phosphate (acyl-PO(4)) from acyl-[acyl-carrier-protein] (acyl-ACP). This enzyme utilizes acyl-ACP as fatty acyl donor, but not acyl-CoA. In Desulforamulus reducens (strain ATCC BAA-1160 / DSM 100696 / MI-1) (Desulfotomaculum reducens), this protein is Phosphate acyltransferase.